The following is a 394-amino-acid chain: Actin-related protein 2 (394 aa).

Residue Met-1 is modified to N-acetylmethionine. ATP-binding positions include 160–162 (GDG) and 214–218 (RMIKE). Lys-299 is modified (N6-acetyllysine). 305–310 (GGSTMY) provides a ligand contact to ATP. N6-acetyllysine is present on Lys-322.

Belongs to the actin family. ARP2 subfamily. In terms of assembly, component of the Arp2/3 complex composed of ACTR2/ARP2, ACTR3/ARP3, ARPC1B/p41-ARC, ARPC2/p34-ARC, ARPC3/p21-ARC, ARPC4/p20-ARC and ARPC5/p16-ARC.

The protein resides in the cytoplasm. It is found in the cytoskeleton. The protein localises to the cell projection. Its subcellular location is the nucleus. ATP-binding component of the Arp2/3 complex, a multiprotein complex that mediates actin polymerization upon stimulation by nucleation-promoting factor (NPF). The Arp2/3 complex mediates the formation of branched actin networks in the cytoplasm, providing the force for cell motility. Seems to contact the pointed end of the daughter actin filament. In addition to its role in the cytoplasmic cytoskeleton, the Arp2/3 complex also promotes actin polymerization in the nucleus, thereby regulating gene transcription and repair of damaged DNA. The Arp2/3 complex promotes homologous recombination (HR) repair in response to DNA damage by promoting nuclear actin polymerization, leading to drive motility of double-strand breaks (DSBs). The chain is Actin-related protein 2 (Actr2) from Rattus norvegicus (Rat).